A 318-amino-acid polypeptide reads, in one-letter code: Olfactory receptor-like protein COR3 (318 aa).

Residues 1–26 lie on the Extracellular side of the membrane; the sequence is MASGNCTTPTTFILSGLTDNPGLQMP. The N-linked (GlcNAc...) asparagine glycan is linked to N5. Residues 27 to 49 form a helical membrane-spanning segment; the sequence is LFMVFLAIYTITLLTNLGLIRLI. Topologically, residues 50 to 57 are cytoplasmic; that stretch reads SVDLHLQT. The helical transmembrane segment at 58 to 79 threads the bilayer; it reads PMYIFLQNLSFTDAAYSTVITP. The Extracellular segment spans residues 80 to 100; that stretch reads KMLATFLEERKTISYVGCILQ. C97 and C179 are oxidised to a cystine. The helical transmembrane segment at 101-120 threads the bilayer; it reads YFSFVLLTTSECLLLAVMAY. At 121 to 139 the chain is on the cytoplasmic side; sequence DRYVAICKPLLYPAIMTKA. Residues 140–164 form a helical membrane-spanning segment; the sequence is VCWRLVESLYFLAFLNSLVHTCGLL. At 165 to 205 the chain is on the extracellular side; the sequence is KLSFCYSNVVNHFFCDISPLFQISSSSIAISELLVIISGSL. Residues 206-226 traverse the membrane as a helical segment; the sequence is FVMSSIIIILISYVFIILTVV. The Cytoplasmic portion of the chain corresponds to 227-239; that stretch reads MIRSKDGKYKAFS. A helical membrane pass occupies residues 240 to 260; sequence TCTSHLMAVSLFHGTVIFMYL. Topologically, residues 261 to 271 are extracellular; it reads RPVKLFSLDTD. Residues 272-292 traverse the membrane as a helical segment; sequence KIASLFYTVVIPMLNPLIYSW. Residues 293–318 lie on the Cytoplasmic side of the membrane; that stretch reads RNKEVKDALRRLTATTFGFIDSKAVQ.

This sequence belongs to the G-protein coupled receptor 1 family.

The protein resides in the cell membrane. Functionally, odorant receptor. This Gallus gallus (Chicken) protein is Olfactory receptor-like protein COR3 (COR3).